The primary structure comprises 337 residues: DNA-directed RNA polymerase subunit alpha (337 aa).

The segment at 1–233 is alpha N-terminal domain (alpha-NTD); sequence MIQKNWQELI…DQLAIFVNFE (233 aa). The segment at 249 to 337 is alpha C-terminal domain (alpha-CTD); it reads FNPALLKKVD…DLAKRYEDQY (89 aa).

The protein belongs to the RNA polymerase alpha chain family. In terms of assembly, homodimer. The RNAP catalytic core consists of 2 alpha, 1 beta, 1 beta' and 1 omega subunit. When a sigma factor is associated with the core the holoenzyme is formed, which can initiate transcription.

The enzyme catalyses RNA(n) + a ribonucleoside 5'-triphosphate = RNA(n+1) + diphosphate. Its function is as follows. DNA-dependent RNA polymerase catalyzes the transcription of DNA into RNA using the four ribonucleoside triphosphates as substrates. In Brucella anthropi (strain ATCC 49188 / DSM 6882 / CCUG 24695 / JCM 21032 / LMG 3331 / NBRC 15819 / NCTC 12168 / Alc 37) (Ochrobactrum anthropi), this protein is DNA-directed RNA polymerase subunit alpha.